Here is a 506-residue protein sequence, read N- to C-terminus: ATP synthase subunit alpha (506 aa).

Residue 170 to 177 (GDRQTGKT) coordinates ATP.

It belongs to the ATPase alpha/beta chains family. As to quaternary structure, F-type ATPases have 2 components, CF(1) - the catalytic core - and CF(0) - the membrane proton channel. CF(1) has five subunits: alpha(3), beta(3), gamma(1), delta(1), epsilon(1). CF(0) has four main subunits: a(1), b(1), b'(1) and c(9-12).

The protein resides in the cellular thylakoid membrane. The enzyme catalyses ATP + H2O + 4 H(+)(in) = ADP + phosphate + 5 H(+)(out). In terms of biological role, produces ATP from ADP in the presence of a proton gradient across the membrane. The alpha chain is a regulatory subunit. This is ATP synthase subunit alpha from Synechococcus sp. (strain CC9311).